Here is a 160-residue protein sequence, read N- to C-terminus: Large ribosomal subunit protein eL14 (160 aa).

The interval 136–160 is disordered; it reads SDGTPRILKKDRRERLRAEKAKAKK. Residues 146–160 are compositionally biased toward basic and acidic residues; the sequence is DRRERLRAEKAKAKK.

This sequence belongs to the eukaryotic ribosomal protein eL14 family.

The chain is Large ribosomal subunit protein eL14 (RpL14) from Drosophila virilis (Fruit fly).